A 154-amino-acid chain; its full sequence is UPF0225 protein YPTB2098 (154 aa).

This sequence belongs to the UPF0225 family.

This chain is UPF0225 protein YPTB2098, found in Yersinia pseudotuberculosis serotype I (strain IP32953).